The primary structure comprises 210 residues: Small ribosomal subunit protein uS5 (210 aa).

Residues 1-11 (MTQPNTQTTPN) are compositionally biased toward polar residues. A disordered region spans residues 1-56 (MTQPNTQTTPNDVPAAAEGQHQEQQQQQRRGGGRERRGGGRRGDRRGQERDSEWQE). Over residues 18–29 (EGQHQEQQQQQR) the composition is skewed to low complexity. The span at 32–56 (GGRERRGGGRRGDRRGQERDSEWQE) shows a compositional bias: basic and acidic residues. Residues 54–117 (WQERVVQIRR…ADGKKHLVKV (64 aa)) form the S5 DRBM domain.

Belongs to the universal ribosomal protein uS5 family. In terms of assembly, part of the 30S ribosomal subunit. Contacts proteins S4 and S8.

With S4 and S12 plays an important role in translational accuracy. Functionally, located at the back of the 30S subunit body where it stabilizes the conformation of the head with respect to the body. This is Small ribosomal subunit protein uS5 from Prochlorococcus marinus (strain MIT 9303).